A 474-amino-acid polypeptide reads, in one-letter code: ATP synthase subunit beta (474 aa).

Residue 152–159 participates in ATP binding; the sequence is GGAGVGKT.

This sequence belongs to the ATPase alpha/beta chains family. As to quaternary structure, F-type ATPases have 2 components, CF(1) - the catalytic core - and CF(0) - the membrane proton channel. CF(1) has five subunits: alpha(3), beta(3), gamma(1), delta(1), epsilon(1). CF(0) has three main subunits: a(1), b(2) and c(9-12). The alpha and beta chains form an alternating ring which encloses part of the gamma chain. CF(1) is attached to CF(0) by a central stalk formed by the gamma and epsilon chains, while a peripheral stalk is formed by the delta and b chains.

Its subcellular location is the cell inner membrane. The catalysed reaction is ATP + H2O + 4 H(+)(in) = ADP + phosphate + 5 H(+)(out). Functionally, produces ATP from ADP in the presence of a proton gradient across the membrane. The catalytic sites are hosted primarily by the beta subunits. In Magnetococcus marinus (strain ATCC BAA-1437 / JCM 17883 / MC-1), this protein is ATP synthase subunit beta.